A 474-amino-acid chain; its full sequence is Glutamate--tRNA ligase (474 aa).

The 'HIGH' region signature appears at 9-19; the sequence is PSPTGLLHMGG. The 'KMSKS' region motif lies at 238 to 242; the sequence is KLSKR. Residue K241 participates in ATP binding.

Belongs to the class-I aminoacyl-tRNA synthetase family. Glutamate--tRNA ligase type 1 subfamily. As to quaternary structure, monomer.

The protein localises to the cytoplasm. It carries out the reaction tRNA(Glu) + L-glutamate + ATP = L-glutamyl-tRNA(Glu) + AMP + diphosphate. Functionally, catalyzes the attachment of glutamate to tRNA(Glu) in a two-step reaction: glutamate is first activated by ATP to form Glu-AMP and then transferred to the acceptor end of tRNA(Glu). In Buchnera aphidicola subsp. Cinara cedri (strain Cc), this protein is Glutamate--tRNA ligase.